We begin with the raw amino-acid sequence, 535 residues long: Flavonoid 3'-monooxygenase CYP75B4 (535 aa).

Residues 8-28 (ISTSLLLTTVALSVIVCYALV) traverse the membrane as a helical segment. Cys469 contacts heme.

This sequence belongs to the cytochrome P450 family. It depends on heme as a cofactor.

It localises to the membrane. The enzyme catalyses a 3'-unsubstituted flavone + reduced [NADPH--hemoprotein reductase] + O2 = a 3'-hydroxyflavone + oxidized [NADPH--hemoprotein reductase] + H2O + H(+). The protein operates within secondary metabolite biosynthesis; flavonoid biosynthesis. In terms of biological role, catalyzes the 3'-hydroxylation of the flavonoid B-ring to the 3',4'-hydroxylated state. Catalyzes in vitro 3'-hydroxylation of different flavonoids. Catalyzes the conversion of apigenin to luteolin, naringenin to eriodictyol, and kaempferol to quercetin. Possesses specific 5'-hydroxylase activity toward chrysoeriol (a 3'-methoxylated flavone) and is indispensable for tricin formation. Converts chrysoeriol to selgin, a precursor of tricin, suggesting that chrysoeriol, instead of tricetin, is an intermediate in tricin biosynthesis. In Oryza sativa subsp. japonica (Rice), this protein is Flavonoid 3'-monooxygenase CYP75B4.